The following is a 728-amino-acid chain: Plakophilin-1 (728 aa).

The interval 1 to 235 is required for binding to single stranded DNA; it reads MNHSPLKTAL…SFGHSRASSK (235 aa). The interval 1 to 287 is required for interaction with EIF4A1; the sequence is MNHSPLKTAL…ESAKQQVYQL (287 aa). Residue Ser-4 is modified to Phosphoserine; by RIPK4. Positions 48-69 are disordered; sequence TVKRQKSKSSQSSTLSHSNRGS. Phosphorylation in this region is required for cytoplasmic localization and protein stabilization stretches follow at residues 54–69 and 117–192; these read SKSS…NRGS and RFSS…STCS. A Phosphoserine modification is found at Ser-119. Residue Ser-120 is modified to Phosphoserine; by RIPK4. Ser-122 carries the phosphoserine modification. A Phosphoserine; by RIPK4 modification is found at Ser-143. The tract at residues 161–270 is required for WNT-mediated nuclear localization; it reads YCDPRGTLRK…KYQAIGAYYI (110 aa). ARM repeat units follow at residues 244–275, 276–317, 318–360, 361–412, 413–443, 505–536, 537–583, 584–629, and 630–694; these read SGLT…HTCF, QDES…NLVF, RSTP…NLSS, TDEL…GCLR, NLSS…NCVA, NYDC…LNLM, GKSK…IARL, LQSG…SHTG, and NTSN…DMWA.

Belongs to the beta-catenin family. As to quaternary structure, part of a complex that contains DSG3, PKP1, YAP1 and YWHAG; the complex is required for localization of DSG3 and YAP1 to the cell membrane in keratinocytes. Interacts (via N-terminus) with KRT5/CK5, KRT8/CK8 (via rod domain), KRT15/CK15 and KRT18/CK18 (via rod domain) as part of intermediate filaments. Interacts with VIM (via rod domain). Interacts with DSP. Interacts with DES. Interacts with FXR1; the interaction may facilitate the binding of PKP1 to PKP2, PKP3 and DSP mRNA. Interacts (via N-terminus) with EIF4A1; the interaction promotes EIF4A1 recruitment to the cap-dependent translation complex and EIF4A1 ATPase activity. Interacts with TJP1/ZO-1; the interaction facilitates TJP1/ZO-1 localization to the plasma membrane. Interacts (when phosphorylated) with YWHAG; the interaction results in translocation of PKP1 to the cytoplasm and loss of intercellular adhesion in keratinocytes. Post-translationally, phosphorylated by AKT2; required for interaction with YWHAG and subsequent localization away from desmosomes to the cytoplasm. Phosphorylation of Ser-119 by AKT2 promotes PKP1-driven cap-dependent mRNA translation and decreases intercellular adhesion, phosphorylation is promoted by insulin. Phosphorylation by RIPK4 at the N-terminus is required for its role in differentiation of keratinocytes and DSG1 localization at cell junctions. In terms of tissue distribution, expressed in undifferentiated keratinocytes of the epidermis at birth, expression increases as differentiation proceeds (at protein level). Expressed in the cervical loop during early tooth differentiation, expression is then present between ameloblasts, at ameloblast-ameloblast junctions and in the stratum intermedium during pre-secretory and secretory stages of tooth development (at protein level).

Its subcellular location is the nucleus. The protein localises to the cytoplasm. The protein resides in the perinuclear region. It localises to the cell junction. It is found in the desmosome. Its subcellular location is the cell membrane. The protein localises to the stress granule. A component of desmosome cell-cell junctions which are required for positive regulation of cellular adhesion. Plays a role in desmosome protein expression regulation and localization to the desmosomal plaque, thereby maintaining cell sheet integrity and anchorage of desmosomes to intermediate filaments. Required for localization of DSG3 and YAP1 to the cell membrane in keratinocytes in response to mechanical strain, via the formation of an interaction complex composed of DSG3, YAP1, PKP1 and YWHAG. Positively regulates differentiation of keratinocytes, potentially via promoting localization of DSG1 at desmosome cell junctions. Required for calcium-independent development and maturation of desmosome plaques specifically at lateral cell-cell contacts in differentiating keratinocytes. Plays a role in the maintenance of DSG3 protein abundance, DSG3 clustering and localization of these clusters to the cell membrane in keratinocytes. May also promote keratinocyte proliferation and morphogenesis during postnatal development. Required for tight junction inside-out transepidermal barrier function of the skin, and is thereby involved in neonatal survival possibly via maintenance of hydration levels. Promotes Wnt-mediated proliferation and differentiation of ameloblasts, via facilitating TJP1/ZO-1 localization to tight junctions. Binds single-stranded DNA (ssDNA), and may thereby play a role in sensing DNA damage and promoting cell survival. Positively regulates cap-dependent translation and as a result cell proliferation, via recruitment of EIF4A1 to the initiation complex and promotion of EIF4A1 ATPase activity. Regulates the mRNA stability and protein abundance of desmosome components PKP2, PKP3, DSC2 and DSP, potentially via its interaction with FXR1. This Mus musculus (Mouse) protein is Plakophilin-1 (Pkp1).